Reading from the N-terminus, the 507-residue chain is DNA replication licensing factor MCM6 (507 aa).

In terms of domain architecture, MCM spans 32 to 239; it reads LYHNLCTSLF…TDYAIARRIV (208 aa). ATP-binding residues include His45, Ser85, Thr86, Ala87, Lys88, Ser89, and Asn190. The short motif at 214–217 is the Arginine finger element; the sequence is SRFD. ADP is bound by residues Arg305 and Glu308. Lys329 bears the N6-acetyllysine mark. The segment at 365–392 is disordered; sequence GPGGINGHADSPAPVNGFNGSGEDASQE. Phosphoserine is present on residues Ser375, Ser390, and Ser448. Thr477 carries the phosphothreonine modification.

It belongs to the MCM family. As to quaternary structure, component of the MCM2-7 complex. The complex forms a toroidal hexameric ring with the proposed subunit order MCM2-MCM6-MCM4-MCM7-MCM3-MCM5. Component of the CMG helicase complex, a hexameric ring of related MCM2-7 subunits stabilized by CDC45 and the tetrameric GINS complex. May interact with MCM10. Interacts with TIPIN. Interacts with CDT1. Interacts with MCMBP. Interacts with DDI2. Post-translationally, O-glycosylated (O-GlcNAcylated), in a cell cycle-dependent manner.

Its subcellular location is the nucleus. It localises to the chromosome. The enzyme catalyses ATP + H2O = ADP + phosphate + H(+). Functionally, acts as a component of the MCM2-7 complex (MCM complex) which is the replicative helicase essential for 'once per cell cycle' DNA replication initiation and elongation in eukaryotic cells. Core component of CDC45-MCM-GINS (CMG) helicase, the molecular machine that unwinds template DNA during replication, and around which the replisome is built. The active ATPase sites in the MCM2-7 ring are formed through the interaction surfaces of two neighboring subunits such that a critical structure of a conserved arginine finger motif is provided in trans relative to the ATP-binding site of the Walker A box of the adjacent subunit. The six ATPase active sites, however, are likely to contribute differentially to the complex helicase activity. The polypeptide is DNA replication licensing factor MCM6 (Mcm6) (Rattus norvegicus (Rat)).